The primary structure comprises 212 residues: Ras-related protein Rab-15 (212 aa).

The GTP site is built by S17, G18, V19, G20, K21, T22, C23, S35, S39, and T40. A Mg(2+)-binding site is contributed by T22. Short sequence motifs (switch) lie at residues 31-45 and 63-80; these read NEFH…GVDF and DTAG…YYRR. The Mg(2+) site is built by T40 and D63. GTP-binding residues include G66, N121, K122, D124, S151, and A152. Positions 192–212 are disordered; sequence ELEEDEGKPEGPANSSKTCWC. 2 S-geranylgeranyl cysteine lipidation sites follow: C210 and C212. C212 is modified (cysteine methyl ester).

The protein belongs to the small GTPase superfamily. Rab family. As to quaternary structure, the GTP bound form of RAB15 interacts with REP15. Interacts (GTP-bound form) with MICAL1, MICAL3, MICALCL, EHBP1 and EHBP1L1. The cofactor is Mg(2+).

The protein resides in the cell membrane. The enzyme catalyses GTP + H2O = GDP + phosphate + H(+). Regulated by guanine nucleotide exchange factors (GEFs) which promote the exchange of bound GDP for free GTP. Regulated by GTPase activating proteins (GAPs) which increase the GTP hydrolysis activity. Inhibited by GDP dissociation inhibitors (GDIs). In terms of biological role, the small GTPases Rab are key regulators of intracellular membrane trafficking, from the formation of transport vesicles to their fusion with membranes. Rabs cycle between an inactive GDP-bound form and an active GTP-bound form that is able to recruit to membranes different sets of downstream effectors directly responsible for vesicle formation, movement, tethering and fusion. RAB15 may act in concert with RAB3A in regulating aspects of synaptic vesicle membrane flow within the nerve terminal. The chain is Ras-related protein Rab-15 (RAB15) from Bos taurus (Bovine).